A 252-amino-acid polypeptide reads, in one-letter code: MRRTRSAVATGPREQRRSGATGGLSGGESRAQRSRSRTRAGAGGGGGAVGPQPSAKPRPKPPPRAQEAAAEEPPPAVTPAASVSALDLGEQRERWETFQKRQRLSFEGAAKLLLDTFEYQGLVKHTGGCHCGAVRFEVWASADLHIFDCNCSICKKKQNRHFIVPASRFKLLKGAESITTYTFNTHKAQHTFCKRCGVQSFYTPRSNPGGFGIAPHCLDEGTVRSVVTEEFNGSDWERAMKEHKTIKNMSKE.

A disordered region spans residues 1–80 (MRRTRSAVAT…EEPPPAVTPA (80 aa)). The residue at position 18 (Ser-18) is a Phosphoserine. Arg-39 carries the omega-N-methylarginine modification. Residues 54–64 (SAKPRPKPPPR) are compositionally biased toward pro residues. Thr-78 bears the Phosphothreonine mark. Residues 125–237 (HTGGCHCGAV…TEEFNGSDWE (113 aa)) enclose the CENP-V/GFA domain. Zn(2+) contacts are provided by Cys-129, Cys-131, Cys-149, Cys-151, Cys-154, Cys-193, and Cys-196. The residue at position 234 (Ser-234) is a Phosphoserine.

It belongs to the Gfa family. Zn(2+) is required as a cofactor.

It localises to the chromosome. It is found in the centromere. The protein localises to the kinetochore. Its subcellular location is the nucleus. The protein resides in the cytoplasm. It localises to the cytoskeleton. It is found in the spindle. Its function is as follows. Required for distribution of pericentromeric heterochromatin in interphase nuclei and for centromere formation and organization, chromosome alignment and cytokinesis. The sequence is that of Centromere protein V (Cenpv) from Mus musculus (Mouse).